A 210-amino-acid chain; its full sequence is Synaptosomal-associated protein 25 (210 aa).

A disordered region spans residues 1 to 23; that stretch reads MENSVENSMDPRSEQEEMQRCAD. Positions 9–20 are enriched in basic and acidic residues; the sequence is MDPRSEQEEMQR. T-SNARE coiled-coil homology domains follow at residues 23–85 and 147–209; these read DQIT…LSDL and DARE…ATKM.

The protein belongs to the SNAP-25 family.

The protein localises to the synapse. It is found in the synaptosome. Its subcellular location is the cell membrane. Functionally, may play an important role in the synaptic function of specific neuronal systems. Associates with proteins involved in vesicle docking and membrane fusion. This is Synaptosomal-associated protein 25 (snap25) from Torpedo marmorata (Marbled electric ray).